The sequence spans 436 residues: Enolase (436 aa).

Gln-167 serves as a coordination point for (2R)-2-phosphoglycerate. Residue Glu-209 is the Proton donor of the active site. The Mg(2+) site is built by Asp-246, Glu-291, and Asp-318. Positions 343, 372, 373, and 394 each coordinate (2R)-2-phosphoglycerate. The active-site Proton acceptor is Lys-343.

Belongs to the enolase family. As to quaternary structure, component of the RNA degradosome, a multiprotein complex involved in RNA processing and mRNA degradation. Mg(2+) serves as cofactor.

The protein resides in the cytoplasm. It localises to the secreted. It is found in the cell surface. The catalysed reaction is (2R)-2-phosphoglycerate = phosphoenolpyruvate + H2O. It functions in the pathway carbohydrate degradation; glycolysis; pyruvate from D-glyceraldehyde 3-phosphate: step 4/5. Catalyzes the reversible conversion of 2-phosphoglycerate (2-PG) into phosphoenolpyruvate (PEP). It is essential for the degradation of carbohydrates via glycolysis. The sequence is that of Enolase from Haemophilus influenzae (strain ATCC 51907 / DSM 11121 / KW20 / Rd).